We begin with the raw amino-acid sequence, 193 residues long: Dual-action ribosomal maturation protein DarP (193 aa).

The protein belongs to the DarP family.

Its subcellular location is the cytoplasm. Member of a network of 50S ribosomal subunit biogenesis factors which assembles along the 30S-50S interface, preventing incorrect 23S rRNA structures from forming. Promotes peptidyl transferase center (PTC) maturation. This Vibrio cholerae serotype O1 (strain ATCC 39315 / El Tor Inaba N16961) protein is Dual-action ribosomal maturation protein DarP.